Here is a 251-residue protein sequence, read N- to C-terminus: 5'-nucleotidase SurE (251 aa).

A divalent metal cation contacts are provided by Asp-8, Asp-9, Ser-39, and Asn-91.

The protein belongs to the SurE nucleotidase family. The cofactor is a divalent metal cation.

It localises to the cytoplasm. The catalysed reaction is a ribonucleoside 5'-phosphate + H2O = a ribonucleoside + phosphate. Its function is as follows. Nucleotidase that shows phosphatase activity on nucleoside 5'-monophosphates. The sequence is that of 5'-nucleotidase SurE from Nitrosococcus oceani (strain ATCC 19707 / BCRC 17464 / JCM 30415 / NCIMB 11848 / C-107).